The following is a 544-amino-acid chain: Chitin-inducible gibberellin-responsive protein 2 (544 aa).

Residues 1-123 (MADTPTSRMI…VGASCVTEDP (123 aa)) form a disordered region. 3 stretches are compositionally biased toward polar residues: residues 15–30 (NIPS…SDNP), 63–74 (SQATPNKYTLDS), and 86–101 (PSSQ…PLSQ). A GRAS domain is found at 165-544 (RMMGIPRGNL…RPLVVSSAWH (380 aa)). Residues 172–232 (GNLKELLIAC…VARLASSGIS (61 aa)) are leucine repeat I (LRI). The VHIID stretch occupies residues 251–316 (MHFLYEACPY…GGPPTVRITG (66 aa)). Residues 282–286 (IHIID) carry the VHIID motif. Residues 332–364 (LVGRRLSHIASLCKVPFEFHPLAISGSKVEAAH) form a leucine repeat II (LRII) region. Residues 373–467 (LAVNFTLELH…QHCLAREIVN (95 aa)) are PFYRE. The segment at 470-544 (ACEGEERAER…RPLVVSSAWH (75 aa)) is SAW.

This sequence belongs to the GRAS family.

The protein localises to the nucleus. In terms of biological role, may play a regulatory role in the early step of oligosaccharide elicitor response, downstream of the membrane-associated high-affinity chitin-binding protein. This Oryza sativa subsp. japonica (Rice) protein is Chitin-inducible gibberellin-responsive protein 2 (CIGR2).